The sequence spans 133 residues: Ribosome-binding factor A (133 aa).

This sequence belongs to the RbfA family. In terms of assembly, monomer. Binds 30S ribosomal subunits, but not 50S ribosomal subunits or 70S ribosomes.

Its subcellular location is the cytoplasm. In terms of biological role, one of several proteins that assist in the late maturation steps of the functional core of the 30S ribosomal subunit. Associates with free 30S ribosomal subunits (but not with 30S subunits that are part of 70S ribosomes or polysomes). Required for efficient processing of 16S rRNA. May interact with the 5'-terminal helix region of 16S rRNA. The sequence is that of Ribosome-binding factor A from Escherichia coli O127:H6 (strain E2348/69 / EPEC).